The primary structure comprises 547 residues: CTP synthase (547 aa).

The tract at residues 1–265 is amidoligase domain; that stretch reads MTRYVFITGG…DEIVLRKLHI (265 aa). Residue Ser-13 participates in CTP binding. Ser-13 is a UTP binding site. Residues 14-19 and Asp-71 each bind ATP; that span reads SLGKGI. Residues Asp-71 and Glu-139 each coordinate Mg(2+). Residues 146–148, 186–191, and Lys-222 contribute to the CTP site; these read DIE and KTKPTQ. UTP contacts are provided by residues 186–191 and Lys-222; that span reads KTKPTQ. Positions 290–541 constitute a Glutamine amidotransferase type-1 domain; sequence TVGMVGKYVD…IRAARAQHEK (252 aa). Gly-351 is a binding site for L-glutamine. Catalysis depends on Cys-378, which acts as the Nucleophile; for glutamine hydrolysis. Residues 379-382, Glu-402, and Arg-469 each bind L-glutamine; that span reads LGMQ. Residues His-514 and Glu-516 contribute to the active site.

The protein belongs to the CTP synthase family. As to quaternary structure, homotetramer.

The enzyme catalyses UTP + L-glutamine + ATP + H2O = CTP + L-glutamate + ADP + phosphate + 2 H(+). The catalysed reaction is L-glutamine + H2O = L-glutamate + NH4(+). It catalyses the reaction UTP + NH4(+) + ATP = CTP + ADP + phosphate + 2 H(+). The protein operates within pyrimidine metabolism; CTP biosynthesis via de novo pathway; CTP from UDP: step 2/2. Allosterically activated by GTP, when glutamine is the substrate; GTP has no effect on the reaction when ammonia is the substrate. The allosteric effector GTP functions by stabilizing the protein conformation that binds the tetrahedral intermediate(s) formed during glutamine hydrolysis. Inhibited by the product CTP, via allosteric rather than competitive inhibition. Catalyzes the ATP-dependent amination of UTP to CTP with either L-glutamine or ammonia as the source of nitrogen. Regulates intracellular CTP levels through interactions with the four ribonucleotide triphosphates. The sequence is that of CTP synthase from Thioalkalivibrio sulfidiphilus (strain HL-EbGR7).